The sequence spans 347 residues: GMP reductase (347 aa).

NADP(+) is bound at residue 108–131 (ADFEKTKQILDLNPALNFVCIDVA). Residues Gly181 and Gly183 each contribute to the K(+) site. Cys186 (thioimidate intermediate) is an active-site residue. 216–239 (IVSDGGCTTPGDVAKAFGGGADFV) lines the NADP(+) pocket.

It belongs to the IMPDH/GMPR family. GuaC type 1 subfamily. Homotetramer.

The catalysed reaction is IMP + NH4(+) + NADP(+) = GMP + NADPH + 2 H(+). Functionally, catalyzes the irreversible NADPH-dependent deamination of GMP to IMP. It functions in the conversion of nucleobase, nucleoside and nucleotide derivatives of G to A nucleotides, and in maintaining the intracellular balance of A and G nucleotides. This is GMP reductase from Escherichia coli (strain SMS-3-5 / SECEC).